The sequence spans 677 residues: MTQVAKKILVTCALPYANGSIHLGHMLEHIQADVWVRYQRMRGHEVNFICADDAHGTPIMLKAQQLGITPEQMIGEMSQEHQTDFAGFNISYDNYHSTHSDENRELSELIYTRLKENGFIKNRTISQLYDPEKGMFLPDRFVKGTCPKCKSADQYGDNCEVCGATYSPTELIEPKSVVSGATPVMRDSEHFFFDLPSFSEMLQAWTRSGALQEQVANKMQEWFESGLQQWDISRDAPYFGFEIPNAPGKYFYVWLDAPIGYMGSFKNLCDKRGDTTSFDEYWKKDSDAELYHFIGKDIVYFHSLFWPAMLEGSHFRKPTNLFVHGYVTVNGAKMSKSRGTFIKASTWLKHFDADSLRYYYTAKLSSRIDDIDLNLEDFVQRVNADIVNKVVNLASRNAGFINKRFDGVLAAELADPQLYKTFTDAAAVIGEAWESREFGKAIREIMALADVANRYVDEQAPWVVAKQEGRDADLQAICSMGINLFRVLMTYLKPVLPTLSERVEAFLNSELNWDAIEQPLLSHKVNTFKALYNRIDMKQVEALVEASKEEVKAAAAPVTGPLADFPIQETITFDDFAKIDLRVALIENAEFVEGSDKLLRLTLDLGGEKRNVFSGIRSAYPDPQALIGRQTVMVANLAPRKMRFGVSEGMVMAAGPGGKDIFLLSPDDGAKPGQQVK.

The 'HIGH' region motif lies at 15–25 (PYANGSIHLGH). 4 residues coordinate Zn(2+): cysteine 146, cysteine 149, cysteine 159, and cysteine 162. The 'KMSKS' region motif lies at 333-337 (KMSKS). Residue lysine 336 participates in ATP binding. The 103-residue stretch at 575–677 (DFAKIDLRVA…DGAKPGQQVK (103 aa)) folds into the tRNA-binding domain.

This sequence belongs to the class-I aminoacyl-tRNA synthetase family. MetG type 1 subfamily. Homodimer. Requires Zn(2+) as cofactor.

Its subcellular location is the cytoplasm. It catalyses the reaction tRNA(Met) + L-methionine + ATP = L-methionyl-tRNA(Met) + AMP + diphosphate. Functionally, is required not only for elongation of protein synthesis but also for the initiation of all mRNA translation through initiator tRNA(fMet) aminoacylation. The polypeptide is Methionine--tRNA ligase (Salmonella choleraesuis (strain SC-B67)).